Here is a 286-residue protein sequence, read N- to C-terminus: MAGAKEIKTKIASVKNTQKITSAMEMVAASKMRRAQDRMTASRPYAESMRKVIGHVAQGSLEYKHPYLEVREAKRVGYIVVASDRGLCGGLNVNLFKKVVSDVKNWKAQGVEVEFCPIGARSVQFFKAFGGKVQAHASGLGDAPKLADLIGTVRVMLQAYNEGKLDRLYVVFNKFVNTMTQTPVIEQLLPLPKSEDDEIAHHWDYIYEQDPKDLLDTLLVRYVESQVYQGVVENIASEQAARMVAMKAATDNAGTLIDDLQLVYNKARQAAITQELSEIVSGAAAV.

This sequence belongs to the ATPase gamma chain family. As to quaternary structure, F-type ATPases have 2 components, CF(1) - the catalytic core - and CF(0) - the membrane proton channel. CF(1) has five subunits: alpha(3), beta(3), gamma(1), delta(1), epsilon(1). CF(0) has three main subunits: a, b and c.

The protein localises to the cell inner membrane. Produces ATP from ADP in the presence of a proton gradient across the membrane. The gamma chain is believed to be important in regulating ATPase activity and the flow of protons through the CF(0) complex. The polypeptide is ATP synthase gamma chain (Shewanella amazonensis (strain ATCC BAA-1098 / SB2B)).